We begin with the raw amino-acid sequence, 51 residues long: Cytochrome b559 subunit beta (51 aa).

Residues 26–42 traverse the membrane as a helical segment; that stretch reads WLAVHALAVPTVFFIGS. H30 is a heme binding site.

The protein belongs to the PsbE/PsbF family. As to quaternary structure, heterodimer of an alpha subunit and a beta subunit. PSII is composed of 1 copy each of membrane proteins PsbA, PsbB, PsbC, PsbD, PsbE, PsbF, PsbH, PsbI, PsbJ, PsbK, PsbL, PsbM, PsbT, PsbY, PsbZ, Psb30/Ycf12, at least 3 peripheral proteins of the oxygen-evolving complex and a large number of cofactors. It forms dimeric complexes. Requires heme b as cofactor.

It is found in the plastid. The protein localises to the chloroplast thylakoid membrane. Its function is as follows. This b-type cytochrome is tightly associated with the reaction center of photosystem II (PSII). PSII is a light-driven water:plastoquinone oxidoreductase that uses light energy to abstract electrons from H(2)O, generating O(2) and a proton gradient subsequently used for ATP formation. It consists of a core antenna complex that captures photons, and an electron transfer chain that converts photonic excitation into a charge separation. This chain is Cytochrome b559 subunit beta, found in Bigelowiella natans (Pedinomonas minutissima).